We begin with the raw amino-acid sequence, 533 residues long: Aspartic proteinase sxa1 (533 aa).

A signal peptide spans 1 to 23 (MKASFFVFAISALQALQASVASA). Residues 76-434 (YFANLTLGSN…DWDAQKIGLA (359 aa)) form the Peptidase A1 domain. A glycan (N-linked (GlcNAc...) asparagine) is linked at asparagine 79. The active site involves aspartate 94. N-linked (GlcNAc...) asparagine glycosylation is found at asparagine 106, asparagine 138, asparagine 153, asparagine 166, asparagine 271, asparagine 278, asparagine 299, and asparagine 319. Aspartate 325 is a catalytic residue. Asparagine 439 carries an N-linked (GlcNAc...) asparagine glycan.

This sequence belongs to the peptidase A1 family.

Functionally, involved in degradation or processing of the mating pheromones. Its loss may cause a persistent response to the pheromones. It may cleave the mating pheromone M-factor. May be involved in processing of zymogens that are required for zygote formation. In Schizosaccharomyces pombe (strain 972 / ATCC 24843) (Fission yeast), this protein is Aspartic proteinase sxa1 (sxa1).